The following is an 866-amino-acid chain: MSVSNLSWLKKKSQSVDITAPGFNPLGGAGKQAPQASKPPAPKTPIIEEEQNNSANTQKHPSRKSELKRFYTIDTGQKKTLDKKDGRRMSFQKPKGTIEYTVESRDSLNSIALKFDTTPNELVQLNKLFSRAVVTGQVLYVPDPEYVSSVESSPSLSPVSPLSPTSSEAEFDKTTTPDVAHPKEAPPASTVSGIRPARVVSSTSEEEEAFTEKFLKINCKYITIGKGTVSGVLLVTPNNIMFDPHKTDPLVQENGCEEYGIMCPMEEVMSAAMYKEILDSKIKESLPIELDQLSGRGSCHSKKATGVSAEDADPRARDQGNDSASTAPRSTEESLSEDAFTESELSPIREELLSSEPRQEKSSDASSESVQTVSQMEVQSLTATSEAANVPDRTSSNPGALSHETGLSGLETATKGGDKATESLQEVSGPKEQSTEVKGQDNQDSSHQESSLQQEAGEDSVSSGETVELKEKPAVLKDQQGQELKRDSETEVEELRKLWKTHSMQQAKQQRDTIQQVSQRESKHSSAAADAHGEGSSLLKEKRRHRLHKFLCLRVGKPMRKTFVSQASATMQQYAQRDKKHEYWFAVPQERTDHLYAFFIQWSPEIYAEDSGEYTREPGFIVVKKMDESEANEAPAGEAAAREWEVVSVAEYHRRIDALNTEELRTLCRRLQITTREDINSKQVAPAKADLEPESFRPNLSDPSELLLPDQIEKLTKHLPPRTIGYPWTLVYGTGKHGTSLKTLYRTMTGLDTPVLMVIKDSDGQVFGALASEPFKVSDGFYGTGETFVFTFCPEFEVFKWTGDNMFFIKGDMDSLAFGGGGGEFALWLDGDLYHGRSHSCKTFGNHTLSKKEDFFIQDIEIWAFE.

The disordered stretch occupies residues 1-92 (MSVSNLSWLK…KKDGRRMSFQ (92 aa)). A compositionally biased stretch (basic and acidic residues) spans 63–88 (RKSELKRFYTIDTGQKKTLDKKDGRR). Ser90 is modified (phosphoserine). The LysM domain occupies 98 to 141 (IEYTVESRDSLNSIALKFDTTPNELVQLNKLFSRAVVTGQVLYV). Thr118 bears the Phosphothreonine mark. Residues 150-168 (VESSPSLSPVSPLSPTSSE) show a composition bias toward low complexity. The interval 150 to 202 (VESSPSLSPVSPLSPTSSEAEFDKTTTPDVAHPKEAPPASTVSGIRPARVVSS) is disordered. A compositionally biased stretch (basic and acidic residues) spans 170–184 (EFDKTTTPDVAHPKE). Residues Ser201, Ser202, and Ser204 each carry the phosphoserine modification. Residues 213–268 (KFLKINCKYITIGKGTVSGVLLVTPNNIMFDPHKTDPLVQENGCEEYGIMCPMEEV) form the GRAM domain. The disordered stretch occupies residues 293 to 540 (LSGRGSCHSK…AHGEGSSLLK (248 aa)). 3 positions are modified to phosphoserine: Ser294, Ser334, and Ser336. The residue at position 341 (Thr341) is a Phosphothreonine. Ser346 is modified (phosphoserine). Positions 347 to 363 (PIREELLSSEPRQEKSS) are enriched in basic and acidic residues. Residues 364-399 (DASSESVQTVSQMEVQSLTATSEAANVPDRTSSNPG) are compositionally biased toward polar residues. Over residues 433–447 (QSTEVKGQDNQDSSH) the composition is skewed to basic and acidic residues. Over residues 448-465 (QESSLQQEAGEDSVSSGE) the composition is skewed to polar residues. The segment covering 483-497 (ELKRDSETEVEELRK) has biased composition (basic and acidic residues). Phosphoserine is present on Ser488. A compositionally biased stretch (polar residues) spans 502–519 (HSMQQAKQQRDTIQQVSQ). The segment at 543–570 (RRHRLHKFLCLRVGKPMRKTFVSQASAT) is mediates oxidative antimutator activity. Residues 682–703 (KQVAPAKADLEPESFRPNLSDP) are disordered. The region spanning 705–866 (ELLLPDQIEK…IQDIEIWAFE (162 aa)) is the TLDc domain.

The protein belongs to the OXR1 family. In terms of tissue distribution, highly expressed in brain and testis.

It localises to the mitochondrion. It is found in the nucleus. The protein localises to the nucleolus. May be involved in protection from oxidative damage. The sequence is that of Oxidation resistance protein 1 (Oxr1) from Mus musculus (Mouse).